Consider the following 335-residue polypeptide: GTPase Obg (335 aa).

The region spanning 1 to 158 is the Obg domain; it reads MFVDQITLEL…RLVELELKLI (158 aa). Positions 159-334 constitute an OBG-type G domain; the sequence is ADIGLVGFPN…LYDLFKSKLS (176 aa). Residues 165 to 172, 190 to 194, 215 to 218, 285 to 288, and 315 to 317 contribute to the GTP site; these read GFPNAGKS, FTTLH, DIPG, NKID, and SGL. Positions 172 and 192 each coordinate Mg(2+).

It belongs to the TRAFAC class OBG-HflX-like GTPase superfamily. OBG GTPase family. Monomer. Requires Mg(2+) as cofactor.

The protein localises to the cytoplasm. In terms of biological role, an essential GTPase which binds GTP, GDP and possibly (p)ppGpp with moderate affinity, with high nucleotide exchange rates and a fairly low GTP hydrolysis rate. Plays a role in control of the cell cycle, stress response, ribosome biogenesis and in those bacteria that undergo differentiation, in morphogenesis control. This is GTPase Obg from Chlamydia trachomatis serovar L2 (strain ATCC VR-902B / DSM 19102 / 434/Bu).